A 139-amino-acid chain; its full sequence is Protein archease (139 aa).

Ca(2+) is bound by residues Asp-12, Asp-138, and Ile-139.

It belongs to the archease family.

In terms of biological role, activates the tRNA-splicing ligase complex by facilitating the enzymatic turnover of catalytic subunit RtcB. Acts by promoting the guanylylation of RtcB, a key intermediate step in tRNA ligation. Can also alter the NTP specificity of RtcB such that ATP, dGTP or ITP is used efficiently. The protein is Protein archease of Saccharolobus islandicus (strain L.S.2.15 / Lassen #1) (Sulfolobus islandicus).